We begin with the raw amino-acid sequence, 647 residues long: MAEEEAPKKSRAAGGGASWELCAGALSARLAEEGSGDAGGRRRPPVDPRRLARQLLLLLWLLEAPLLLGVRAQAAGQGPGQGPGPGQQPPPPPQQQQSGQQYNGERGISVPDHGYCQPISIPLCTDIAYNQTIMPNLLGHTNQEDAGLEVHQFYPLVKVQCSAELKFFLCSMYAPVCTVLEQALPPCRSLCERARQGCEALMNKFGFQWPDTLKCEKFPVHGAGELCVGQNTSDKGTPTPSLLPEFWTSNPQHGGGGHRGGFPGGAGASERGKFSCPRALKVPSYLNYHFLGEKDCGAPCEPTKVYGLMYFGPEELRFSRTWIGIWSVLCCASTLFTVLTYLVDMRRFSYPERPIIFLSGCYTAVAVAYIAGFLLEDRVVCNDKFAEDGARTVAQGTKKEGCTILFMMLYFFSMASSIWWVILSLTWFLAAGMKWGHEAIEANSQYFHLAAWAVPAIKTITILALGQVDGDVLSGVCFVGLNNVDALRGFVLAPLFVYLFIGTSFLLAGFVSLFRIRTIMKHDGTKTEKLEKLMVRIGVFSVLYTVPATIVIACYFYEQAFRDQWERSWVAQSCKSYAIPCPHLQAGGGAPPHPPMSPDFTVFMIKYLMTLIVGITSGFWIWSGKTLNSWRKFYTRLTNSKQGETTV.

Positions 1–69 (MAEEEAPKKS…WLLEAPLLLG (69 aa)) are cleaved as a signal peptide. Over 73 to 322 (QAAGQGPGQG…PEELRFSRTW (250 aa)) the chain is Extracellular. Residues 74–104 (AAGQGPGQGPGPGQQPPPPPQQQQSGQQYNG) are disordered. The 120-residue stretch at 111-230 (PDHGYCQPIS…HGAGELCVGQ (120 aa)) folds into the FZ domain. Cystine bridges form between C116–C177, C124–C170, C161–C198, C187–C227, and C191–C215. A glycan (N-linked (GlcNAc...) asparagine) is linked at N130. The N-linked (GlcNAc...) asparagine glycan is linked to N231. Residues 323-343 (IGIWSVLCCASTLFTVLTYLV) traverse the membrane as a helical segment. The Cytoplasmic portion of the chain corresponds to 344–354 (DMRRFSYPERP). The chain crosses the membrane as a helical span at residues 355–375 (IIFLSGCYTAVAVAYIAGFLL). Residues 376–402 (EDRVVCNDKFAEDGARTVAQGTKKEGC) are Extracellular-facing. A helical membrane pass occupies residues 403–423 (TILFMMLYFFSMASSIWWVIL). At 424–445 (SLTWFLAAGMKWGHEAIEANSQ) the chain is on the cytoplasmic side. A helical membrane pass occupies residues 446–466 (YFHLAAWAVPAIKTITILALG). The Extracellular segment spans residues 467-489 (QVDGDVLSGVCFVGLNNVDALRG). The chain crosses the membrane as a helical span at residues 490-510 (FVLAPLFVYLFIGTSFLLAGF). The Cytoplasmic portion of the chain corresponds to 511–536 (VSLFRIRTIMKHDGTKTEKLEKLMVR). A helical transmembrane segment spans residues 537 to 557 (IGVFSVLYTVPATIVIACYFY). The Extracellular segment spans residues 558-601 (EQAFRDQWERSWVAQSCKSYAIPCPHLQAGGGAPPHPPMSPDFT). The chain crosses the membrane as a helical span at residues 602-622 (VFMIKYLMTLIVGITSGFWIW). Over 623–647 (SGKTLNSWRKFYTRLTNSKQGETTV) the chain is Cytoplasmic. The Lys-Thr-X-X-X-Trp motif, mediates interaction with the PDZ domain of Dvl family members signature appears at 625 to 630 (KTLNSW). Positions 645 to 647 (TTV) match the PDZ-binding motif.

Belongs to the G-protein coupled receptor Fz/Smo family. As to quaternary structure, interacts with MYOC. Interacts with WNT7B. (Microbial infection) Interacts with C.difficile toxin TcdB; frizzled receptors constitute the major host receptors for TcdB in the colonic epithelium. In terms of processing, ubiquitinated by ZNRF3, leading to its degradation by the proteasome. Expressed in adult heart, placenta, lung, kidney, pancreas, prostate, and ovary and in fetal lung and kidney.

The protein resides in the cell membrane. Its function is as follows. Receptor for Wnt proteins. Activated by WNT3A, WNT3, WNT1 and to a lesser extent WNT2, but apparently not by WNT4, WNT5A, WNT5B, WNT6, WNT7A or WNT7B. Contradictory results showing activation by WNT7B have been described for mouse. Functions in the canonical Wnt/beta-catenin signaling pathway. The canonical Wnt/beta-catenin signaling pathway leads to the activation of disheveled proteins, inhibition of GSK-3 kinase, nuclear accumulation of beta-catenin and activation of Wnt target genes. A second signaling pathway involving PKC and calcium fluxes has been seen for some family members, but it is not yet clear if it represents a distinct pathway or if it can be integrated in the canonical pathway, as PKC seems to be required for Wnt-mediated inactivation of GSK-3 kinase. Both pathways seem to involve interactions with G-proteins. May be involved in transduction and intercellular transmission of polarity information during tissue morphogenesis and/or in differentiated tissues. (Microbial infection) Acts as a receptor for C.difficile toxin TcdB in the colonic epithelium. The protein is Frizzled-1 (FZD1) of Homo sapiens (Human).